The following is a 416-amino-acid chain: Probable glucan 1,3-beta-glucosidase A (416 aa).

The signal sequence occupies residues methionine 1 to alanine 22. Glutamate 211 serves as the catalytic Proton donor. Intrachain disulfides connect cysteine 291–cysteine 415 and cysteine 316–cysteine 342. Glutamate 308 serves as the catalytic Nucleophile. N-linked (GlcNAc...) asparagine glycosylation is present at asparagine 344.

Belongs to the glycosyl hydrolase 5 (cellulase A) family. As to quaternary structure, monomer. It depends on Mn(2+) as a cofactor.

It is found in the secreted. It carries out the reaction Successive hydrolysis of beta-D-glucose units from the non-reducing ends of (1-&gt;3)-beta-D-glucans, releasing alpha-glucose.. Beta-glucanases participate in the metabolism of beta-glucan, the main structural component of the cell wall. It could also function biosynthetically as a transglycosylase. In Aspergillus fumigatus (strain CBS 144.89 / FGSC A1163 / CEA10) (Neosartorya fumigata), this protein is Probable glucan 1,3-beta-glucosidase A (exgA).